Reading from the N-terminus, the 185-residue chain is V-type proton ATPase subunit E (185 aa).

The protein belongs to the V-ATPase E subunit family.

Produces ATP from ADP in the presence of a proton gradient across the membrane. In Deinococcus deserti (strain DSM 17065 / CIP 109153 / LMG 22923 / VCD115), this protein is V-type proton ATPase subunit E.